Here is a 477-residue protein sequence, read N- to C-terminus: Cysteine--tRNA ligase (477 aa).

Cys-30 is a binding site for Zn(2+). Residues 32-42 (PTVYDYNHIGH) carry the 'HIGH' region motif. 3 residues coordinate Zn(2+): Cys-209, His-234, and Glu-238. Positions 267 to 271 (KMSKS) match the 'KMSKS' region motif. Residue Lys-270 coordinates ATP.

The protein belongs to the class-I aminoacyl-tRNA synthetase family. Zn(2+) is required as a cofactor.

Its subcellular location is the cytoplasm. It carries out the reaction tRNA(Cys) + L-cysteine + ATP = L-cysteinyl-tRNA(Cys) + AMP + diphosphate. In Staphylothermus marinus (strain ATCC 43588 / DSM 3639 / JCM 9404 / F1), this protein is Cysteine--tRNA ligase.